The following is a 640-amino-acid chain: MDYENQIANIFSLNGELSQNIKGFRPRAEQLEMAYAVGKAIQNKSSLVIEAGTGTGKTFAYLAPALVFGKKTIISTGSKNLQDQLFNRDLPAIKKALNFTGKIALLKGRANYLCLERLDQVIAQGVLGDKSVLAELSKVRKWNNSTKTGDFTECIELAEDSPIIPQLTSTAESCLGTDCPNYSECYVASARKKALNADLVVVNHHLFFADMAVKESGFGELIPNAEVIIFDEAHQLPDIASQYFGQSLTSRQLFDLCKDINIVYRTELKDMQQLGTTSDTLLKVVQDFRLLLGNGSNVRGNWRELYTQSAVKKAFELLQEKIDFLSEVIKLALGRSQTLDSIFERVESIKIQLKRLSETNIVGYCYWYEGNGRQFGLHITPLTVADKFGAQLEAKEAAWIFTSATLEVGGTFNHFCQRLGIENATQKILYSPFNYPEQSLLCVPRYLPNTNQMNTLNSLGEILLPVIEANKGRCFVLCTSYSMMRGLAEYFREKSHLSILLQGETSKGKLLEQFIKETHSVLVATSSFWEGVDVRGDALSLVIIDKLPFTAPDEPLLKARIEDCRLQGGDPFNDIQIPEAVITLKQGVGRLIRDVTDRGVVIICDNRLVMRNYGETFLKSLPNSSRTRDLNKVIQFLQNK.

Residues Glu16 to Ser278 form the Helicase ATP-binding domain. Ala51–Thr58 is a binding site for ATP. Cys114 provides a ligand contact to [4Fe-4S] cluster. The DEAH box signature appears at Gly125 to Gly128. [4Fe-4S] cluster is bound by residues Cys174, Cys179, and Cys185. The DEAH box motif lies at Asp231 to His234. The Helicase C-terminal domain maps to Ser458 to Ile634.

This sequence belongs to the helicase family. DinG subfamily. It depends on [4Fe-4S] cluster as a cofactor.

The catalysed reaction is Couples ATP hydrolysis with the unwinding of duplex DNA at the replication fork by translocating in the 5'-3' direction. This creates two antiparallel DNA single strands (ssDNA). The leading ssDNA polymer is the template for DNA polymerase III holoenzyme which synthesizes a continuous strand.. It catalyses the reaction ATP + H2O = ADP + phosphate + H(+). In terms of biological role, probably a 5'-3' DNA helicase. This is ATP-dependent DNA helicase YoaA from Haemophilus influenzae (strain ATCC 51907 / DSM 11121 / KW20 / Rd).